The primary structure comprises 294 residues: Cytidine deaminase (294 aa).

CMP/dCMP-type deaminase domains lie at 48-168 (DEDA…FGPK) and 186-294 (LTGD…VLLA). 89–91 (NME) lines the substrate pocket. His-102 serves as a coordination point for Zn(2+). The Proton donor role is filled by Glu-104. Zn(2+)-binding residues include Cys-129 and Cys-132.

It belongs to the cytidine and deoxycytidylate deaminase family. Homodimer. Zn(2+) is required as a cofactor.

It carries out the reaction cytidine + H2O + H(+) = uridine + NH4(+). The catalysed reaction is 2'-deoxycytidine + H2O + H(+) = 2'-deoxyuridine + NH4(+). In terms of biological role, this enzyme scavenges exogenous and endogenous cytidine and 2'-deoxycytidine for UMP synthesis. The protein is Cytidine deaminase of Escherichia coli O17:K52:H18 (strain UMN026 / ExPEC).